A 182-amino-acid polypeptide reads, in one-letter code: Adenylate kinase (182 aa).

12–17 (GAGKGT) is an ATP binding site. The NMP stretch occupies residues 32–61 (STGELLRKEIDLDTYLGKQVKDIMNKGELV). Residues Thr33, Arg38, 59–61 (ELV), 85–88 (GYPR), and Gln92 contribute to the AMP site. Positions 126-132 (LRGRKDD) are LID. Arg127 serves as a coordination point for ATP. Positions 129 and 140 each coordinate AMP. Gly168 serves as a coordination point for ATP.

Belongs to the adenylate kinase family. In terms of assembly, monomer.

It localises to the cytoplasm. The catalysed reaction is AMP + ATP = 2 ADP. The protein operates within purine metabolism; AMP biosynthesis via salvage pathway; AMP from ADP: step 1/1. Functionally, catalyzes the reversible transfer of the terminal phosphate group between ATP and AMP. Plays an important role in cellular energy homeostasis and in adenine nucleotide metabolism. The protein is Adenylate kinase of Prochlorococcus marinus (strain MIT 9515).